Reading from the N-terminus, the 379-residue chain is Pentatricopeptide repeat-containing protein At3g25210, mitochondrial (379 aa).

PPR repeat units lie at residues 142–177 (SVPL…DDSK), 179–221 (DLET…GVIP), 222–256 (DTFV…GSEP), 257–291 (NAYT…GMVP), 292–326 (NGSC…SLSP), and 327–361 (DMLT…DPVM).

The protein belongs to the PPR family. P subfamily.

Its subcellular location is the mitochondrion. In Arabidopsis thaliana (Mouse-ear cress), this protein is Pentatricopeptide repeat-containing protein At3g25210, mitochondrial.